Consider the following 214-residue polypeptide: A-type ATP synthase subunit D (214 aa).

It belongs to the V-ATPase D subunit family. Has multiple subunits with at least A(3), B(3), C, D, E, F, H, I and proteolipid K(x).

It localises to the cell membrane. In terms of biological role, component of the A-type ATP synthase that produces ATP from ADP in the presence of a proton gradient across the membrane. This chain is A-type ATP synthase subunit D, found in Desulfurococcus sp. (strain SY).